Consider the following 255-residue polypeptide: RNA polymerase sigma-F factor (255 aa).

Positions 61–74 (DLFQIGCIGLLKSV) match the Polymerase core binding motif. The H-T-H motif DNA-binding region spans 221–240 (QSEVADRLGISQVQVSRLEK).

Belongs to the sigma-70 factor family.

In terms of biological role, sigma factors are initiation factors that promote the attachment of RNA polymerase to specific initiation sites and are then released. This sigma factor is responsible for the expression of sporulation specific genes. In Bacillus licheniformis, this protein is RNA polymerase sigma-F factor (sigF).